A 70-amino-acid chain; its full sequence is Putative membrane protein insertion efficiency factor (70 aa).

It belongs to the UPF0161 family.

The protein localises to the cell membrane. In terms of biological role, could be involved in insertion of integral membrane proteins into the membrane. The sequence is that of Putative membrane protein insertion efficiency factor from Chloroflexus aurantiacus (strain ATCC 29366 / DSM 635 / J-10-fl).